The sequence spans 168 residues: Photosystem I assembly protein Ycf3 (168 aa).

TPR repeat units follow at residues 35 to 68 (AFTY…EIDP), 72 to 105 (SYIL…NPFL), and 120 to 153 (GEEA…TPGN).

This sequence belongs to the Ycf3 family.

It is found in the plastid. The protein localises to the chloroplast thylakoid membrane. In terms of biological role, essential for the assembly of the photosystem I (PSI) complex. May act as a chaperone-like factor to guide the assembly of the PSI subunits. The sequence is that of Photosystem I assembly protein Ycf3 from Nuphar advena (Common spatterdock).